The following is a 426-amino-acid chain: MASIVVVGLQWGDEGKGKIVDWLSVSADAVVRFQGGNNAGHTVVADGRVYKLSLLPTSVLRQNKLSMIGSGVALDPYALVREVDSLKDSGIFLDPDSLCLSESCPLVLSVHRDADSIMEEMRGNESIGTTCMGIGPCYEDKVGRRAIRLCDLLDETSLYDKVLCLLSYHNLLRRATNRREVTPHEIMDELTQIAPKVLPFMKPVPEIIVSLIKQGKTVLFEGAQGALLDIDHGTYPYVTSSNTVAGYVRVGCGVGALGDMRVLGLAKAYTTRVGNGPFATEQTGTVGDAMFERGREVGTVTNRVRRCGWFDAVSVRQAALSSGASEMVITKLDVLDTIDEIKVCTKYRCGEESYDYLPAASHIQNRLEPVYETLPGWRTSTLGAVSRSDLPENAVSYISRLEELVGVPVSLVSTGPERNHIVPMNP.

GTP is bound by residues 12–18 (GDEGKGK) and 40–42 (GHT). The active-site Proton acceptor is Asp13. Mg(2+) is bound by residues Asp13 and Gly40. IMP contacts are provided by residues 13 to 16 (DEGK), 38 to 41 (NAGH), Thr130, Arg144, Gln224, Thr239, and Arg303. His41 functions as the Proton donor in the catalytic mechanism. 299 to 305 (TVTNRVR) contributes to the substrate binding site. GTP-binding positions include Arg305, 331-333 (KLD), and 413-415 (STG).

Belongs to the adenylosuccinate synthetase family. In terms of assembly, homodimer. It depends on Mg(2+) as a cofactor.

It is found in the cytoplasm. The enzyme catalyses IMP + L-aspartate + GTP = N(6)-(1,2-dicarboxyethyl)-AMP + GDP + phosphate + 2 H(+). It functions in the pathway purine metabolism; AMP biosynthesis via de novo pathway; AMP from IMP: step 1/2. Functionally, plays an important role in the de novo pathway of purine nucleotide biosynthesis. Catalyzes the first committed step in the biosynthesis of AMP from IMP. The sequence is that of Adenylosuccinate synthetase from Anaplasma marginale (strain St. Maries).